The sequence spans 124 residues: Ribonuclease pancreatic (124 aa).

Basic and acidic residues predominate over residues 1-13 (KETAAEKFQRQHM). The disordered stretch occupies residues 1 to 21 (KETAAEKFQRQHMDTSSSLSN). Positions 7 and 10 each coordinate substrate. His12 serves as the catalytic Proton acceptor. 4 disulfide bridges follow: Cys26–Cys84, Cys40–Cys95, Cys58–Cys110, and Cys65–Cys72. Asn34 carries N-linked (GlcNAc...) asparagine glycosylation. Residues 41-45 (KPVNT), Lys66, and Arg85 each bind substrate. Residue His119 is the Proton donor of the active site.

The protein belongs to the pancreatic ribonuclease family. Monomer. Interacts with and forms tight 1:1 complexes with RNH1. Dimerization of two such complexes may occur. Interaction with RNH1 inhibits this protein. In terms of tissue distribution, pancreas.

It localises to the secreted. It carries out the reaction an [RNA] containing cytidine + H2O = an [RNA]-3'-cytidine-3'-phosphate + a 5'-hydroxy-ribonucleotide-3'-[RNA].. The catalysed reaction is an [RNA] containing uridine + H2O = an [RNA]-3'-uridine-3'-phosphate + a 5'-hydroxy-ribonucleotide-3'-[RNA].. Functionally, endonuclease that catalyzes the cleavage of RNA on the 3' side of pyrimidine nucleotides. Acts on single-stranded and double-stranded RNA. In Hippopotamus amphibius (Hippopotamus), this protein is Ribonuclease pancreatic (RNASE1).